Reading from the N-terminus, the 319-residue chain is 7-methylguanosine phosphate-specific 5'-nucleotidase (319 aa).

Asp55 functions as the Nucleophile in the catalytic mechanism. Mg(2+) contacts are provided by Asp55 and Asp57. Asp57 functions as the Proton donor in the catalytic mechanism. Glu103 contacts CMP. N(7)-methyl-GMP is bound by residues Glu103 and Ser124. 171-172 (SA) provides a ligand contact to substrate. Asp245 contributes to the Mg(2+) binding site.

It belongs to the pyrimidine 5'-nucleotidase family. As to quaternary structure, monomer. The cofactor is Mg(2+).

It carries out the reaction N(7)-methyl-GMP + H2O = N(7)-methylguanosine + phosphate. The catalysed reaction is CMP + H2O = cytidine + phosphate. The enzyme catalyses a ribonucleoside 5'-phosphate + H2O = a ribonucleoside + phosphate. With respect to regulation, inhibited by high levels of AMP. Functionally, specifically hydrolyzes 7-methylguanosine monophosphate (m(7)GMP) to 7-methylguanosine and inorganic phosphate. Also able to mediate hydrolysis of diphosphate (m(7)GDP) to 7-methylguanosine and 2 inorganic phosphate with lower activity. The specific activity for m(7)GMP may protect cells against undesired salvage of m(7)GMP and its incorporation into nucleic acids. Also has weak activity for CMP. UMP and purine nucleotides are poor substrates. This chain is 7-methylguanosine phosphate-specific 5'-nucleotidase, found in Drosophila melanogaster (Fruit fly).